Here is a 430-residue protein sequence, read N- to C-terminus: Adenylosuccinate synthetase (430 aa).

GTP is bound by residues 12 to 18 (GDEGKGK) and 40 to 42 (GHT). Asp13 serves as the catalytic Proton acceptor. Mg(2+)-binding residues include Asp13 and Gly40. Residues 13–16 (DEGK), 38–41 (NAGH), Thr129, Arg143, Gln224, Thr239, and Arg303 contribute to the IMP site. Residue His41 is the Proton donor of the active site. Position 299-305 (299-305 (ATTGRRR)) interacts with substrate. Residues Arg305, 331–333 (KLD), and 413–415 (SVG) each bind GTP.

The protein belongs to the adenylosuccinate synthetase family. In terms of assembly, homodimer. Mg(2+) is required as a cofactor.

Its subcellular location is the cytoplasm. It catalyses the reaction IMP + L-aspartate + GTP = N(6)-(1,2-dicarboxyethyl)-AMP + GDP + phosphate + 2 H(+). Its pathway is purine metabolism; AMP biosynthesis via de novo pathway; AMP from IMP: step 1/2. Its function is as follows. Plays an important role in the de novo pathway of purine nucleotide biosynthesis. Catalyzes the first committed step in the biosynthesis of AMP from IMP. The protein is Adenylosuccinate synthetase of Desulfatibacillum aliphaticivorans.